The following is a 310-amino-acid chain: MAGAAPTTAFGQAVIGPPGSGKTTYCLGMSEFLRALGRRVAVVNLDPANEGLPYECAVDVGELVGLGDVMDALQLGPNGGLLYCMEYLEANLDWLRAKLDPLRGHYFLFDCPGQVELCTHHGALRSIFSQMTQWDLRLTAVHLVDSHYCTDPAKFISVLCTSLATMLHVELPHVNLLSKMDLIEHYGKLAFNLDYYTEVLDLSYLLDHLASDPFFRHYRQLNEKLVQLIEDYSLVSFIPLNIQDKESIQQVLQAVDKANGYCFGVQEQRSLEAMMSAAMGADFHFSSTLGLQEKYLAPSEQSVEQEAMQL.

Ala-2 is subject to N-acetylalanine. 19–24 (GSGKTT) is a GTP binding site. The Gly-Pro-Asn (GPN)-loop; involved in dimer interface signature appears at 76-78 (GPN). A GTP-binding site is contributed by 178–181 (SKMD).

It belongs to the GPN-loop GTPase family. As to quaternary structure, heterodimers with GPN1 or GPN3. Binds to RNA polymerase II (RNAPII).

Its function is as follows. Small GTPase required for proper localization of RNA polymerase II and III (RNAPII and RNAPIII). May act at an RNAP assembly step prior to nuclear import. In Bos taurus (Bovine), this protein is GPN-loop GTPase 2 (GPN2).